The chain runs to 129 residues: Dynein 14 kDa light chain, flagellar outer arm (129 aa).

Residues 2 to 109 form the Thioredoxin domain; the sequence is AFITEIANEA…LNRIVTELSG (108 aa). A disulfide bridge links Cys-34 with Cys-37. The segment at 107 to 129 is disordered; sequence LSGKNPPPAAPAAAPAAPAAEAS. The span at 117–129 shows a compositional bias: low complexity; that stretch reads PAAAPAAPAAEAS.

As to quaternary structure, consists of at least 3 heavy chains (alpha, beta and gamma), 2 intermediate chains and 8 light chains.

It localises to the cell projection. Its subcellular location is the cilium. The protein resides in the flagellum. The protein localises to the cytoplasm. It is found in the cytoskeleton. It localises to the flagellum axoneme. Its function is as follows. May be involved in regulating the redox state of functionally important thiol groups within dynein. In Chlamydomonas reinhardtii (Chlamydomonas smithii), this protein is Dynein 14 kDa light chain, flagellar outer arm.